Here is a 252-residue protein sequence, read N- to C-terminus: JmjC domain-containing protein A (252 aa).

Positions 103–252 constitute a JmjC domain; that stretch reads PYLRNFGMLD…VSCWGKEMIM (150 aa).

The chain is JmjC domain-containing protein A (jcdA) from Dictyostelium discoideum (Social amoeba).